The chain runs to 151 residues: Succinate dehydrogenase subunit 4, mitochondrial (151 aa).

The N-terminal 78 residues, 1–78 (MSLRRTILDL…RSISSSIGQS (78 aa)), are a transit peptide targeting the mitochondrion. His109 contributes to the heme binding site. Tyr121 is a binding site for a ubiquinone. Residues 130 to 150 (LIVMSLGLFQIIVLKDIILFL) form a helical membrane-spanning segment.

In terms of assembly, component of complex II composed of eight subunits in plants: four classical SDH subunits SDH1, SDH2, SDH3 and SDH4 (a flavoprotein (FP), an iron-sulfur protein (IP), and a cytochrome b composed of a large and a small subunit.), as well as four subunits unknown in mitochondria from bacteria and heterotrophic eukaryotes. Requires heme as cofactor. In terms of tissue distribution, expressed in flowers, inflorescences and stems.

It localises to the mitochondrion inner membrane. The protein operates within carbohydrate metabolism; tricarboxylic acid cycle. Membrane-anchoring subunit of succinate dehydrogenase (SDH). This chain is Succinate dehydrogenase subunit 4, mitochondrial, found in Arabidopsis thaliana (Mouse-ear cress).